The sequence spans 234 residues: Transcriptional regulatory protein WalR (234 aa).

The 114-residue stretch at Lys3 to Leu116 folds into the Response regulatory domain. Asp52 bears the 4-aspartylphosphate mark. The ompR/PhoB-type DNA-binding region spans Pro133–Asn232.

As to quaternary structure, monomer. Homodimer. Post-translationally, phosphorylated by WalK; can also be dephosphorylated by WalK.

The protein localises to the cytoplasm. In terms of biological role, member of the two-component regulatory system WalK/WalR that regulates genes involved in cell wall metabolism. Binds to the promoter region of the transcription factor fabT gene in the fabTH-acp operon in vitro. Inhibits transcription of fabT, probably acting in an unphosphorylated form, thereby playing a role in the regulation of fatty acid biosynthesis. Essential for normal growth in vitro. Required for maintaining normal cellular morphology, acting, at least in part, by regulating peptidoglycan hydrolase pcsB. Involved in maintaining expression of WalRK regulon genes in exponentially growing cells. This chain is Transcriptional regulatory protein WalR, found in Streptococcus pneumoniae serotype 2 (strain D39 / NCTC 7466).